The following is a 148-amino-acid chain: Large ribosomal subunit protein bL27m (148 aa).

The transit peptide at 1–30 (MALAVLAWRTRTAVIALLSPPQAAALAVRY) directs the protein to the mitochondrion.

The protein belongs to the bacterial ribosomal protein bL27 family. As to quaternary structure, component of the mitochondrial ribosome large subunit (39S) which comprises a 16S rRNA and about 50 distinct proteins.

It is found in the mitochondrion. This is Large ribosomal subunit protein bL27m (MRPL27) from Bos taurus (Bovine).